The sequence spans 430 residues: Phosphoribosylamine--glycine ligase (430 aa).

The 206-residue stretch at 109-314 folds into the ATP-grasp domain; sequence RGLMNKYGID…FLTIAEHIIN (206 aa). 136 to 192 is a binding site for ATP; that stretch reads IREYPGDLAVKPTGLTGGKGVKVMGEQVDREGAVEYAMTLKDQVIILEERLLGEEFT. Mg(2+)-binding residues include Gln272, Glu284, and Asn286. Mn(2+)-binding residues include Gln272, Glu284, and Asn286.

Belongs to the GARS family. Mg(2+) serves as cofactor. It depends on Mn(2+) as a cofactor.

The catalysed reaction is 5-phospho-beta-D-ribosylamine + glycine + ATP = N(1)-(5-phospho-beta-D-ribosyl)glycinamide + ADP + phosphate + H(+). Its pathway is purine metabolism; IMP biosynthesis via de novo pathway; N(1)-(5-phospho-D-ribosyl)glycinamide from 5-phospho-alpha-D-ribose 1-diphosphate: step 2/2. This is Phosphoribosylamine--glycine ligase from Methanocorpusculum labreanum (strain ATCC 43576 / DSM 4855 / Z).